The following is a 291-amino-acid chain: Prolyl 4-hydroxylase 5 (291 aa).

Residues 1–22 (MASKSKQHLRYQPRKSVSRSTQ) are Cytoplasmic-facing. A helical; Signal-anchor for type II membrane protein transmembrane segment spans residues 23 to 43 (AFTVLILLLVVILILLGLGIL). The Extracellular portion of the chain corresponds to 44-291 (SLPNANRNSS…KWFHVHEFKV (248 aa)). An N-linked (GlcNAc...) asparagine glycan is attached at Asn51. Residues 163 to 286 (NGEGLQVLHY…KWSSTKWFHV (124 aa)) form the Fe2OG dioxygenase domain. 2 residues coordinate Fe cation: His181 and Asp183. Residue Asn222 is glycosylated (N-linked (GlcNAc...) asparagine). His267 lines the Fe cation pocket. Lys277 lines the 2-oxoglutarate pocket.

It belongs to the P4HA family. It depends on Fe(2+) as a cofactor. The cofactor is L-ascorbate. As to expression, expressed in epidermal root hair cells (trichoblasts).

Its subcellular location is the endoplasmic reticulum membrane. The protein resides in the golgi apparatus membrane. It carries out the reaction L-prolyl-[collagen] + 2-oxoglutarate + O2 = trans-4-hydroxy-L-prolyl-[collagen] + succinate + CO2. Its function is as follows. Catalyzes the post-translational formation of 4-hydroxyproline in -Xaa-Pro-Gly- sequences in proline-rich peptide sequences of plant glycoproteins and other proteins. Hydroxyprolines are important constituent of many plant cell wall glycoproteins such as extensins, hydroxyproline-rich glycoproteins, lectins and arabinogalactan proteins. Possesses high affinity for leucine-rich repeat and proline-rich extensins of root cell walls that are essential for root hair development. Hydroxyprolines define the subsequent O-glycosylation sites by arabinosyltransferases which elongate the O-arabinosides on extensins. In Arabidopsis thaliana (Mouse-ear cress), this protein is Prolyl 4-hydroxylase 5.